A 389-amino-acid polypeptide reads, in one-letter code: Probable protein phosphatase 2C 47 (389 aa).

The PPM-type phosphatase domain occupies 76–346 (RSGSFADIGP…DNLTVIVVCF (271 aa)). Residues aspartate 120, glycine 121, aspartate 294, and aspartate 337 each contribute to the Mn(2+) site.

Belongs to the PP2C family. Mg(2+) serves as cofactor. The cofactor is Mn(2+).

It carries out the reaction O-phospho-L-seryl-[protein] + H2O = L-seryl-[protein] + phosphate. The enzyme catalyses O-phospho-L-threonyl-[protein] + H2O = L-threonyl-[protein] + phosphate. The sequence is that of Probable protein phosphatase 2C 47 from Oryza sativa subsp. japonica (Rice).